A 168-amino-acid polypeptide reads, in one-letter code: Phosphopantetheine adenylyltransferase (168 aa).

Residue Thr-14 coordinates substrate. Residues 14–15 and His-22 each bind ATP; that span reads TF. Lys-46, Leu-78, and Arg-92 together coordinate substrate. ATP contacts are provided by residues 93–95, Glu-103, and 128–134; these read GLR and YSFISSS.

It belongs to the bacterial CoaD family. Homohexamer. Mg(2+) is required as a cofactor.

It localises to the cytoplasm. The enzyme catalyses (R)-4'-phosphopantetheine + ATP + H(+) = 3'-dephospho-CoA + diphosphate. It participates in cofactor biosynthesis; coenzyme A biosynthesis; CoA from (R)-pantothenate: step 4/5. In terms of biological role, reversibly transfers an adenylyl group from ATP to 4'-phosphopantetheine, yielding dephospho-CoA (dPCoA) and pyrophosphate. The sequence is that of Phosphopantetheine adenylyltransferase from Xanthomonas oryzae pv. oryzae (strain MAFF 311018).